The following is a 966-amino-acid chain: Mitogen-activated protein kinase kinase kinase 13 (966 aa).

Disordered stretches follow at residues M1–K22 and S93–G112. The segment covering A96–G112 has biased composition (polar residues). The region spanning I168–I409 is the Protein kinase domain. Residues L174–V182 and K195 each bind ATP. The Proton acceptor role is filled by D279. Leucine-zipper regions lie at residues V433 to L454 and L486 to V507. Disordered regions lie at residues K534–H652, D744–R834, S846–L873, and D887–L906. The span at S567–K581 shows a compositional bias: low complexity. Residues S582–N594 show a composition bias toward basic residues. Polar residues-rich tracts occupy residues Q609–P629 and F781–L795. A compositionally biased stretch (acidic residues) spans D814–V827. Residues S815–E828 form an acidic region. The segment covering S846 to V855 has biased composition (polar residues).

It belongs to the protein kinase superfamily. STE Ser/Thr protein kinase family. MAP kinase kinase kinase subfamily. Homodimer; forms dimers through the leucine-zipper motif. Interacts with the C-terminus of MAPK8IP1 through the kinase catalytic domain. Binds PRDX3. Associates with the IKK complex through the kinase domain. Requires Mg(2+) as cofactor. Post-translationally, autophosphorylated on serine and threonine residues.

The protein localises to the cytoplasm. Its subcellular location is the membrane. The enzyme catalyses L-seryl-[protein] + ATP = O-phospho-L-seryl-[protein] + ADP + H(+). It carries out the reaction L-threonyl-[protein] + ATP = O-phospho-L-threonyl-[protein] + ADP + H(+). With respect to regulation, activated by autophosphorylation and homodimerization. Its function is as follows. Activates the JUN N-terminal pathway through activation of the MAP kinase kinase MAP2K7. Acts synergistically with PRDX3 to regulate the activation of NF-kappa-B in the cytosol. This activation is kinase-dependent and involves activating the IKK complex, the IKBKB-containing complex that phosphorylates inhibitors of NF-kappa-B. The protein is Mitogen-activated protein kinase kinase kinase 13 of Pongo abelii (Sumatran orangutan).